A 414-amino-acid polypeptide reads, in one-letter code: N-carbamoyl-L-amino-acid amidohydrolase (414 aa).

Residues His83, Asp94, Glu129, and His195 each coordinate a divalent metal cation. Residues Gln198, His231, Asn281, Arg294, and Gly363 each contribute to the an N-carbamoyl-L-alpha-amino acid site. The involved in dimerization stretch occupies residues 214-333 (GIAGPSWFKV…QIEKNMAAVP (120 aa)). His388 contributes to the a divalent metal cation binding site.

It belongs to the peptidase M20 family. As to quaternary structure, homodimer. It depends on Mn(2+) as a cofactor. Requires Ni(2+) as cofactor. Co(2+) is required as a cofactor. The cofactor is Fe(2+).

The catalysed reaction is an N-carbamoyl-L-alpha-amino acid + H2O + 2 H(+) = an L-alpha-amino acid + NH4(+) + CO2. The enzyme catalyses N-carbamoyl-L-methionine + H2O + 2 H(+) = L-methionine + NH4(+) + CO2. Catalyzes the hydrolysis of N-carbamoyl-L-alpha-amino acids to free L-alpha-amino acids. Is strictly L-specific since it is inactive toward N-carbamoyl-D-alpha-amino acids. This is N-carbamoyl-L-amino-acid amidohydrolase from Pseudomonas sp. (strain NS671).